Here is a 222-residue protein sequence, read N- to C-terminus: Glutathione S-transferase alpha-4 (222 aa).

The residue at position 1 (Met-1) is an N-acetylmethionine. One can recognise a GST N-terminal domain in the interval 3–83; it reads VKPKLYYFQG…YLAAKYNLYG (81 aa). Glutathione is bound by residues Tyr-9, 54-55, and 67-68; these read QV and QT. Positions 85–208 constitute a GST C-terminal domain; sequence DLKERVRIDM…QPGSQRKPPP (124 aa).

It belongs to the GST superfamily. Alpha family. As to quaternary structure, homodimer.

It localises to the cytoplasm. The enzyme catalyses RX + glutathione = an S-substituted glutathione + a halide anion + H(+). Its function is as follows. Conjugation of reduced glutathione to a wide number of exogenous and endogenous hydrophobic electrophiles. In Rattus norvegicus (Rat), this protein is Glutathione S-transferase alpha-4 (Gsta4).